The primary structure comprises 734 residues: Tripartite terminase subunit 3 (734 aa).

Positions 183–189 match the Nuclear localization signal motif; the sequence is PKKRAKV. The short motif at 258 to 265 is the Walker A motif element; sequence VPRRHGKT. The Walker B motif signature appears at 352–357; the sequence is LLFVDE. Glu357 serves as the catalytic For ATPase activity. Active-site for nuclease activity residues include Asp509, Glu581, and Asp706.

It belongs to the herpesviridae TRM3 protein family. As to quaternary structure, interacts with the terminase subunits TRM1 and TRM2. Interacts with portal protein.

Its subcellular location is the host nucleus. Its function is as follows. Component of the molecular motor that translocates viral genomic DNA in empty capsid during DNA packaging. Forms a tripartite terminase complex together with TRM1 and TRM2 in the host cytoplasm. Once the complex reaches the host nucleus, it interacts with the capsid portal vertex. This portal forms a ring in which genomic DNA is translocated into the capsid. TRM3 carries an RNase H-like nuclease activity that plays an important role for the cleavage of concatemeric viral DNA into unit length genomes. This is Tripartite terminase subunit 3 from Human herpesvirus 2 (strain HG52) (HHV-2).